We begin with the raw amino-acid sequence, 535 residues long: RNA-splicing ligase RtcB homolog 1 (535 aa).

Residues 1–16 (MAKSRYSRKNKGKKLQ) show a composition bias toward basic residues. The interval 1-29 (MAKSRYSRKNKGKKLQRVQENTVSTEEKS) is disordered. Aspartate 152, cysteine 155, histidine 260, histidine 292, and histidine 383 together coordinate Mn(2+). 259–263 (NHYLE) provides a ligand contact to GMP. GMP-binding positions include 383 to 384 (HN), 432 to 435 (GGSM), serine 439, 458 to 461 (HGAG), and lysine 534. Catalysis depends on histidine 458, which acts as the GMP-histidine intermediate.

Belongs to the RtcB family. In terms of assembly, catalytic component of the tRNA-splicing ligase complex. Mn(2+) serves as cofactor.

The catalysed reaction is a 3'-end 3'-phospho-ribonucleotide-RNA + a 5'-end dephospho-ribonucleoside-RNA + GTP = a ribonucleotidyl-ribonucleotide-RNA + GMP + diphosphate. It carries out the reaction a 3'-end 2',3'-cyclophospho-ribonucleotide-RNA + a 5'-end dephospho-ribonucleoside-RNA + GTP + H2O = a ribonucleotidyl-ribonucleotide-RNA + GMP + diphosphate + H(+). Its function is as follows. Catalytic subunit of the tRNA-splicing ligase complex that acts by directly joining spliced tRNA halves to mature-sized tRNAs by incorporating the precursor-derived splice junction phosphate into the mature tRNA as a canonical 3',5'-phosphodiester. May act as an RNA ligase with broad substrate specificity, and may function toward other RNAs. The polypeptide is RNA-splicing ligase RtcB homolog 1 (Entamoeba dispar (strain ATCC PRA-260 / SAW760)).